Here is a 307-residue protein sequence, read N- to C-terminus: Metapyrocatechase (307 aa).

VOC domains follow at residues 7–122 (RPGH…LYAD) and 150–269 (RFDH…VFCG). Positions 153, 214, and 265 each coordinate Fe cation.

It belongs to the extradiol ring-cleavage dioxygenase family. As to quaternary structure, homotetramer. Fe(2+) is required as a cofactor.

It catalyses the reaction catechol + O2 = (2Z,4E)-2-hydroxy-6-oxohexa-2,4-dienoate + H(+). It functions in the pathway xenobiotic degradation; toluene degradation. In Pseudomonas putida (Arthrobacter siderocapsulatus), this protein is Metapyrocatechase (xylE).